The sequence spans 752 residues: Ribosomal RNA large subunit methyltransferase K/L (752 aa).

The THUMP domain maps to 53–164 (QMYKICLWTR…RDELHISIDL (112 aa)).

It belongs to the methyltransferase superfamily. RlmKL family.

The protein resides in the cytoplasm. The enzyme catalyses guanosine(2445) in 23S rRNA + S-adenosyl-L-methionine = N(2)-methylguanosine(2445) in 23S rRNA + S-adenosyl-L-homocysteine + H(+). The catalysed reaction is guanosine(2069) in 23S rRNA + S-adenosyl-L-methionine = N(2)-methylguanosine(2069) in 23S rRNA + S-adenosyl-L-homocysteine + H(+). Specifically methylates the guanine in position 2445 (m2G2445) and the guanine in position 2069 (m7G2069) of 23S rRNA. This is Ribosomal RNA large subunit methyltransferase K/L from Saccharophagus degradans (strain 2-40 / ATCC 43961 / DSM 17024).